Here is a 657-residue protein sequence, read N- to C-terminus: N-acetylgalactosaminyltransferase 7 (657 aa).

At 1-6 the chain is on the cytoplasmic side; the sequence is MRLKIG. The helical; Signal-anchor for type II membrane protein transmembrane segment at 7–29 threads the bilayer; it reads FILRSLLVVGSFLGLVVLWSSLS. The segment at 30-66 is disordered; that stretch reads SRPDDPSPLSRMREDRDVNNPLPNRGGNGLAPGDDRF. Residues 30–657 are Lumenal-facing; it reads SRPDDPSPLS…KWEMNNIHSV (628 aa). 5 cysteine pairs are disulfide-bonded: cysteine 197–cysteine 435, cysteine 426–cysteine 507, cysteine 545–cysteine 562, cysteine 585–cysteine 600, and cysteine 625–cysteine 640. A catalytic subdomain A region spans residues 206 to 317; it reads LLTSSVVIVF…VNWYAPLVAP (112 aa). Substrate-binding residues include aspartate 247 and arginine 277. Mn(2+)-binding residues include aspartate 301 and histidine 303. A catalytic subdomain B region spans residues 381 to 443; it reads PYRSPAMAGG…PCSRVGHIYR (63 aa). Tryptophan 412 is a substrate binding site. Residue histidine 440 coordinates Mn(2+). Arginine 443 contacts substrate. Positions 532 to 652 constitute a Ricin B-type lectin domain; it reads VEWGEIRGLE…GKMTQKWEMN (121 aa).

Belongs to the glycosyltransferase 2 family. GalNAc-T subfamily. It depends on Mn(2+) as a cofactor. Highly expressed in sublingual gland. Expressed at lower level in stomach, small intestiine and colon.

It is found in the golgi apparatus membrane. The enzyme catalyses L-seryl-[protein] + UDP-N-acetyl-alpha-D-galactosamine = a 3-O-[N-acetyl-alpha-D-galactosaminyl]-L-seryl-[protein] + UDP + H(+). The catalysed reaction is L-threonyl-[protein] + UDP-N-acetyl-alpha-D-galactosamine = a 3-O-[N-acetyl-alpha-D-galactosaminyl]-L-threonyl-[protein] + UDP + H(+). The protein operates within protein modification; protein glycosylation. In terms of biological role, glycopeptide transferase involved in O-linked oligosaccharide biosynthesis, which catalyzes the transfer of an N-acetyl-D-galactosamine residue to an already glycosylated peptide. In contrast to other proteins of the family, it does not act as a peptide transferase that transfers GalNAc onto serine or threonine residue on the protein receptor, but instead requires the prior addition of a GalNAc on a peptide before adding additional GalNAc moieties. Some peptide transferase activity is however not excluded, considering that its appropriate peptide substrate may remain unidentified. This is N-acetylgalactosaminyltransferase 7 (Galnt7) from Rattus norvegicus (Rat).